The sequence spans 101 residues: Feather keratin Cos2-2 (101 aa).

Serine 2 is modified (N-acetylserine).

Belongs to the avian keratin family. As to quaternary structure, the avian keratins (F-ker, S-ker, C-ker and B-ker) are a complex mixture of very similar polypeptides.

This is Feather keratin Cos2-2 from Columba livia (Rock dove).